The following is a 104-amino-acid chain: MAIVKATDQSFSAETSEGVVLADFWAPWCGPCKMIAPVLEELDQEMGDKLKIVKIDVDENQETAGKYGVMSIPTLLVLKDGEVVETSVGFKPKEALQELVNKHL.

In terms of domain architecture, Thioredoxin spans 2–104 (AIVKATDQSF…ALQELVNKHL (103 aa)). Residues Cys-29 and Cys-32 are joined by a disulfide bond.

This sequence belongs to the thioredoxin family.

Functionally, participates in various redox reactions through the reversible oxidation of its active center dithiol to a disulfide and catalyzes dithiol-disulfide exchange reactions. The protein is Thioredoxin (trxA) of Bacillus subtilis (strain 168).